The primary structure comprises 927 residues: Phosphoenolpyruvate carboxylase (927 aa).

Active-site residues include His160 and Lys589.

Belongs to the PEPCase type 1 family. It depends on Mg(2+) as a cofactor.

The catalysed reaction is oxaloacetate + phosphate = phosphoenolpyruvate + hydrogencarbonate. Forms oxaloacetate, a four-carbon dicarboxylic acid source for the tricarboxylic acid cycle. The chain is Phosphoenolpyruvate carboxylase from Rhodopseudomonas palustris (strain BisA53).